Here is a 133-residue protein sequence, read N- to C-terminus: Small ribosomal subunit protein uS9 (133 aa).

Basic and acidic residues predominate over residues 95–113 (GDSKQELKSRGFLTRDPRK). Residues 95 to 133 (GDSKQELKSRGFLTRDPRKKERKKYGHKKARKSFQFSKR) are disordered. The segment covering 114–133 (KERKKYGHKKARKSFQFSKR) has biased composition (basic residues).

The protein belongs to the universal ribosomal protein uS9 family.

The protein is Small ribosomal subunit protein uS9 of Chlamydia felis (strain Fe/C-56) (Chlamydophila felis).